A 476-amino-acid polypeptide reads, in one-letter code: Membrane-bound lytic murein transglycosylase F (476 aa).

The signal sequence occupies residues 1 to 16 (MIKTLFIILLCGILSA). The tract at residues 17-259 (CQPVDIQDVD…HLNEKYFGHV (243 aa)) is non-LT domain. The interval 260-476 (KRFDYVDTRA…VPAKSHVSAQ (217 aa)) is LT domain. Glu-304 is an active-site residue.

The protein in the N-terminal section; belongs to the bacterial solute-binding protein 3 family. In the C-terminal section; belongs to the transglycosylase Slt family.

Its subcellular location is the cell outer membrane. It carries out the reaction Exolytic cleavage of the (1-&gt;4)-beta-glycosidic linkage between N-acetylmuramic acid (MurNAc) and N-acetylglucosamine (GlcNAc) residues in peptidoglycan, from either the reducing or the non-reducing ends of the peptidoglycan chains, with concomitant formation of a 1,6-anhydrobond in the MurNAc residue.. Its function is as follows. Murein-degrading enzyme that degrades murein glycan strands and insoluble, high-molecular weight murein sacculi, with the concomitant formation of a 1,6-anhydromuramoyl product. Lytic transglycosylases (LTs) play an integral role in the metabolism of the peptidoglycan (PG) sacculus. Their lytic action creates space within the PG sacculus to allow for its expansion as well as for the insertion of various structures such as secretion systems and flagella. The polypeptide is Membrane-bound lytic murein transglycosylase F (Shewanella frigidimarina (strain NCIMB 400)).